Consider the following 353-residue polypeptide: Thiamine thiazole synthase 1, chloroplastic (353 aa).

The N-terminal 48 residues, 1-48, are a transit peptide targeting the chloroplast; that stretch reads MATLTSSICSKPKASVFDPHKSSFHGVPIATQARLSPVKSTPVNLAVT. Substrate-binding positions include A97, 117–118, G125, and A190; that span reads EQ. A 2,3-didehydroalanine (Cys) modification is found at C219. Residues D221, H236, M288, and 298-300 each bind substrate; that span reads RMG.

The protein belongs to the THI4 family. Homooctamer. Fe cation is required as a cofactor. During the catalytic reaction, a sulfide is transferred from Cys-219 to a reaction intermediate, generating a dehydroalanine residue.

The protein localises to the plastid. The protein resides in the chloroplast. The catalysed reaction is [ADP-thiazole synthase]-L-cysteine + glycine + NAD(+) = [ADP-thiazole synthase]-dehydroalanine + ADP-5-ethyl-4-methylthiazole-2-carboxylate + nicotinamide + 3 H2O + 2 H(+). Involved in biosynthesis of the thiamine precursor thiazole. Catalyzes the conversion of NAD and glycine to adenosine diphosphate 5-(2-hydroxyethyl)-4-methylthiazole-2-carboxylic acid (ADT), an adenylated thiazole intermediate. The reaction includes an iron-dependent sulfide transfer from a conserved cysteine residue of the protein to a thiazole intermediate. The enzyme can only undergo a single turnover, which suggests it is a suicide enzyme. May have additional roles in adaptation to various stress conditions and in DNA damage tolerance. This Vitis vinifera (Grape) protein is Thiamine thiazole synthase 1, chloroplastic.